Reading from the N-terminus, the 304-residue chain is D-tagatose-1-phosphate kinase (304 aa).

D250 functions as the Proton acceptor in the catalytic mechanism.

Belongs to the carbohydrate kinase PfkB family. Mg(2+) serves as cofactor.

It carries out the reaction alpha-D-tagatopyranose 1-phosphate + ATP = D-tagatofuranose 1,6-bisphosphate + ADP + H(+). The protein operates within carbohydrate degradation. Functionally, kinase involved in a D-tagatose catabolic pathway. Catalyzes the phosphorylation of D-tagatose-1-phosphate (Tag-1P) to D-tagatose-1,6-bisphosphate. This chain is D-tagatose-1-phosphate kinase, found in Klebsiella oxytoca.